A 701-amino-acid chain; its full sequence is Elongation factor G (701 aa).

The region spanning 8–286 (ERIRNIGIIA…AVVYYLPSPV (279 aa)) is the tr-type G domain. GTP contacts are provided by residues 17–24 (AHIDAGKT), 85–89 (DTPGH), and 139–142 (NKMD).

The protein belongs to the TRAFAC class translation factor GTPase superfamily. Classic translation factor GTPase family. EF-G/EF-2 subfamily.

Its subcellular location is the cytoplasm. In terms of biological role, catalyzes the GTP-dependent ribosomal translocation step during translation elongation. During this step, the ribosome changes from the pre-translocational (PRE) to the post-translocational (POST) state as the newly formed A-site-bound peptidyl-tRNA and P-site-bound deacylated tRNA move to the P and E sites, respectively. Catalyzes the coordinated movement of the two tRNA molecules, the mRNA and conformational changes in the ribosome. This is Elongation factor G from Roseiflexus castenholzii (strain DSM 13941 / HLO8).